Here is a 718-residue protein sequence, read N- to C-terminus: Probable glycerol-3-phosphate acyltransferase, mitochondrial (718 aa).

An HXXXXD motif motif is present at residues 167–172 (HRSHLD). A helical transmembrane segment spans residues 409 to 425 (MMCSISPVAVVSCLLLA).

It belongs to the GPAT/DAPAT family.

It is found in the mitochondrion membrane. The catalysed reaction is sn-glycerol 3-phosphate + an acyl-CoA = a 1-acyl-sn-glycero-3-phosphate + CoA. It participates in phospholipid metabolism; CDP-diacylglycerol biosynthesis; CDP-diacylglycerol from sn-glycerol 3-phosphate: step 1/3. This is Probable glycerol-3-phosphate acyltransferase, mitochondrial (acl-6) from Caenorhabditis elegans.